The following is a 340-amino-acid chain: Holliday junction branch migration complex subunit RuvB (340 aa).

Positions 1 to 182 are large ATPase domain (RuvB-L); sequence MSDIDPTVRA…FGIPTRLQFY (182 aa). Residues Leu-21, Arg-22, Gly-63, Lys-66, Thr-67, Thr-68, 129 to 131, Arg-172, Tyr-182, and Arg-219 each bind ATP; that span reads EDF. Thr-67 contributes to the Mg(2+) binding site. The interval 183 to 253 is small ATPAse domain (RuvB-S); the sequence is TEDELFIIVD…LADMALNRLG (71 aa). The segment at 256–340 is head domain (RuvB-H); it reads HLGLDGADRR…PRAQTDLFEG (85 aa). DNA is bound by residues Arg-292, Arg-311, and Arg-316.

Belongs to the RuvB family. As to quaternary structure, homohexamer. Forms an RuvA(8)-RuvB(12)-Holliday junction (HJ) complex. HJ DNA is sandwiched between 2 RuvA tetramers; dsDNA enters through RuvA and exits via RuvB. An RuvB hexamer assembles on each DNA strand where it exits the tetramer. Each RuvB hexamer is contacted by two RuvA subunits (via domain III) on 2 adjacent RuvB subunits; this complex drives branch migration. In the full resolvosome a probable DNA-RuvA(4)-RuvB(12)-RuvC(2) complex forms which resolves the HJ.

The protein resides in the cytoplasm. It catalyses the reaction ATP + H2O = ADP + phosphate + H(+). Functionally, the RuvA-RuvB-RuvC complex processes Holliday junction (HJ) DNA during genetic recombination and DNA repair, while the RuvA-RuvB complex plays an important role in the rescue of blocked DNA replication forks via replication fork reversal (RFR). RuvA specifically binds to HJ cruciform DNA, conferring on it an open structure. The RuvB hexamer acts as an ATP-dependent pump, pulling dsDNA into and through the RuvAB complex. RuvB forms 2 homohexamers on either side of HJ DNA bound by 1 or 2 RuvA tetramers; 4 subunits per hexamer contact DNA at a time. Coordinated motions by a converter formed by DNA-disengaged RuvB subunits stimulates ATP hydrolysis and nucleotide exchange. Immobilization of the converter enables RuvB to convert the ATP-contained energy into a lever motion, pulling 2 nucleotides of DNA out of the RuvA tetramer per ATP hydrolyzed, thus driving DNA branch migration. The RuvB motors rotate together with the DNA substrate, which together with the progressing nucleotide cycle form the mechanistic basis for DNA recombination by continuous HJ branch migration. Branch migration allows RuvC to scan DNA until it finds its consensus sequence, where it cleaves and resolves cruciform DNA. The protein is Holliday junction branch migration complex subunit RuvB of Roseobacter denitrificans (strain ATCC 33942 / OCh 114) (Erythrobacter sp. (strain OCh 114)).